A 366-amino-acid polypeptide reads, in one-letter code: Tetraacyldisaccharide 4'-kinase (366 aa).

62-69 contributes to the ATP binding site; the sequence is RVGGTGKT.

The protein belongs to the LpxK family.

The catalysed reaction is a lipid A disaccharide + ATP = a lipid IVA + ADP + H(+). It participates in glycolipid biosynthesis; lipid IV(A) biosynthesis; lipid IV(A) from (3R)-3-hydroxytetradecanoyl-[acyl-carrier-protein] and UDP-N-acetyl-alpha-D-glucosamine: step 6/6. In terms of biological role, transfers the gamma-phosphate of ATP to the 4'-position of a tetraacyldisaccharide 1-phosphate intermediate (termed DS-1-P) to form tetraacyldisaccharide 1,4'-bis-phosphate (lipid IVA). This Polynucleobacter necessarius subsp. necessarius (strain STIR1) protein is Tetraacyldisaccharide 4'-kinase.